A 110-amino-acid polypeptide reads, in one-letter code: Protein NATD1 (110 aa).

One can recognise an N-acetyltransferase domain in the interval 19–109 (EHDRQRRQFS…PLPQYLERLQ (91 aa)).

It belongs to the NATD1 family. Expressed in the heart, testis, kidney and lung.

This chain is Protein NATD1 (Natd1), found in Mus musculus (Mouse).